A 250-amino-acid chain; its full sequence is tRNA (guanine-N(1)-)-methyltransferase (250 aa).

Residues Gly-114 and 134 to 139 each bind S-adenosyl-L-methionine; that span reads IGDYVL.

Belongs to the RNA methyltransferase TrmD family. In terms of assembly, homodimer.

Its subcellular location is the cytoplasm. It catalyses the reaction guanosine(37) in tRNA + S-adenosyl-L-methionine = N(1)-methylguanosine(37) in tRNA + S-adenosyl-L-homocysteine + H(+). Specifically methylates guanosine-37 in various tRNAs. The sequence is that of tRNA (guanine-N(1)-)-methyltransferase from Moorella thermoacetica (strain ATCC 39073 / JCM 9320).